Here is a 180-residue protein sequence, read N- to C-terminus: NEDD8-conjugating enzyme ubc-12 (180 aa).

Positions 24–180 (VRDKLLAQEL…RVREYISRYC (157 aa)) constitute a UBC core domain. The active-site Glycyl thioester intermediate is Cys112.

It belongs to the ubiquitin-conjugating enzyme family. UBC12 subfamily.

The protein resides in the cytoplasm. The enzyme catalyses [E1 NEDD8-activating enzyme]-S-[NEDD8 protein]-yl-L-cysteine + [E2 NEDD8-conjugating enzyme]-L-cysteine = [E1 NEDD8-activating enzyme]-L-cysteine + [E2 NEDD8-conjugating enzyme]-S-[NEDD8-protein]-yl-L-cysteine.. It participates in protein modification; protein neddylation. Its function is as follows. Accepts the ubiquitin-like protein NEDD8 from the uba-3-ula-1 E1 complex and catalyzes its covalent attachment to other proteins. Plays a role in male tail tip morphogenesis. In Caenorhabditis elegans, this protein is NEDD8-conjugating enzyme ubc-12.